A 341-amino-acid chain; its full sequence is S-adenosylmethionine:tRNA ribosyltransferase-isomerase (341 aa).

This sequence belongs to the QueA family. In terms of assembly, monomer.

Its subcellular location is the cytoplasm. The enzyme catalyses 7-aminomethyl-7-carbaguanosine(34) in tRNA + S-adenosyl-L-methionine = epoxyqueuosine(34) in tRNA + adenine + L-methionine + 2 H(+). Its pathway is tRNA modification; tRNA-queuosine biosynthesis. In terms of biological role, transfers and isomerizes the ribose moiety from AdoMet to the 7-aminomethyl group of 7-deazaguanine (preQ1-tRNA) to give epoxyqueuosine (oQ-tRNA). This is S-adenosylmethionine:tRNA ribosyltransferase-isomerase from Trichlorobacter lovleyi (strain ATCC BAA-1151 / DSM 17278 / SZ) (Geobacter lovleyi).